Consider the following 466-residue polypeptide: Glutamate--tRNA ligase (466 aa).

The short motif at 10–20 is the 'HIGH' region element; sequence PSPTGYLHVGG. 4 residues coordinate Zn(2+): C99, C101, C126, and D128. Residues 237–241 carry the 'KMSKS' region motif; the sequence is RLSKR. Position 240 (K240) interacts with ATP.

It belongs to the class-I aminoacyl-tRNA synthetase family. Glutamate--tRNA ligase type 1 subfamily. As to quaternary structure, monomer. It depends on Zn(2+) as a cofactor.

It localises to the cytoplasm. The catalysed reaction is tRNA(Glu) + L-glutamate + ATP = L-glutamyl-tRNA(Glu) + AMP + diphosphate. Its function is as follows. Catalyzes the attachment of glutamate to tRNA(Glu) in a two-step reaction: glutamate is first activated by ATP to form Glu-AMP and then transferred to the acceptor end of tRNA(Glu). This Geobacter sulfurreducens (strain ATCC 51573 / DSM 12127 / PCA) protein is Glutamate--tRNA ligase.